A 501-amino-acid polypeptide reads, in one-letter code: uncharacterized protein (501 aa).

Residues 26–46 (ILLLLLGLIVLVNIGINVATM) form a helical membrane-spanning segment. Disordered regions lie at residues 316 to 384 (RGTE…VRRR) and 409 to 501 (EASH…EKLN). Over residues 476–490 (RSSSLPPASTSTLRP) the composition is skewed to low complexity.

It localises to the membrane. This is an uncharacterized protein from Homo sapiens (Human).